The sequence spans 307 residues: Thioredoxin reductase (307 aa).

Residue Glu-34–Gln-41 participates in FAD binding. A disulfide bond links Cys-134 and Cys-137. Asp-275–Val-284 is an FAD binding site.

Belongs to the class-II pyridine nucleotide-disulfide oxidoreductase family. Homodimer. Requires FAD as cofactor.

Its subcellular location is the cytoplasm. It carries out the reaction [thioredoxin]-dithiol + NADP(+) = [thioredoxin]-disulfide + NADPH + H(+). This Treponema pallidum (strain Nichols) protein is Thioredoxin reductase (trxB).